The sequence spans 43 residues: Protein PsbN (43 aa).

The helical transmembrane segment at 5 to 27 (NLVTISISCLLVSLTGYAIYTSF) threads the bilayer.

The protein belongs to the PsbN family.

The protein resides in the plastid. It is found in the chloroplast thylakoid membrane. Its function is as follows. May play a role in photosystem I and II biogenesis. The sequence is that of Protein PsbN from Gnetum gnemon (Spanish joint-fir).